The primary structure comprises 251 residues: N-acetylmuramoyl-L-alanine amidase CwlA (251 aa).

The first 37 residues, 1–37, serve as a signal peptide directing secretion; the sequence is MEIKQMLVPVSRYSVLCPYEMNPTEITFHNTYNDAPA. The N-acetylmuramoyl-L-alanine amidase domain occupies 38-140; it reads INERNNVANN…QERNGKYCPH (103 aa).

Belongs to the N-acetylmuramoyl-L-alanine amidase 2 family.

Its subcellular location is the secreted. The enzyme catalyses Hydrolyzes the link between N-acetylmuramoyl residues and L-amino acid residues in certain cell-wall glycopeptides.. Its function is as follows. Autolysins are involved in some important biological processes such as cell separation, cell-wall turnover, competence for genetic transformation, formation of the flagella and sporulation. The polypeptide is N-acetylmuramoyl-L-alanine amidase CwlA (cwlA) (Bacillus sp).